We begin with the raw amino-acid sequence, 172 residues long: MDLKNYIATIEDYPQEGVTFRDISPLMANGNAYSYAIREIVQYATDKKIDMIVGPEARGFIVGCPVAYELGVGFAPVRKPGKLPREVIEAHYEKEYGIDTLTMHADAIKPGQRVLIVDDLLATGGTVKATIEMIERLGGIVAGCAFLIELDGLDGRQAIEGYDTKVLMNFPG.

Belongs to the purine/pyrimidine phosphoribosyltransferase family. As to quaternary structure, homodimer.

It localises to the cytoplasm. The enzyme catalyses AMP + diphosphate = 5-phospho-alpha-D-ribose 1-diphosphate + adenine. It participates in purine metabolism; AMP biosynthesis via salvage pathway; AMP from adenine: step 1/1. Its function is as follows. Catalyzes a salvage reaction resulting in the formation of AMP, that is energically less costly than de novo synthesis. The polypeptide is Adenine phosphoribosyltransferase (Streptococcus mutans serotype c (strain ATCC 700610 / UA159)).